We begin with the raw amino-acid sequence, 251 residues long: Hydroxyacylglutathione hydrolase (251 aa).

The Zn(2+) site is built by His-53, His-55, Asp-57, His-58, His-109, Asp-126, and His-164.

Belongs to the metallo-beta-lactamase superfamily. Glyoxalase II family. In terms of assembly, monomer. Zn(2+) is required as a cofactor.

The enzyme catalyses an S-(2-hydroxyacyl)glutathione + H2O = a 2-hydroxy carboxylate + glutathione + H(+). The protein operates within secondary metabolite metabolism; methylglyoxal degradation; (R)-lactate from methylglyoxal: step 2/2. In terms of biological role, thiolesterase that catalyzes the hydrolysis of S-D-lactoyl-glutathione to form glutathione and D-lactic acid. In Wigglesworthia glossinidia brevipalpis, this protein is Hydroxyacylglutathione hydrolase.